The primary structure comprises 136 residues: ATP synthase epsilon chain (136 aa).

This sequence belongs to the ATPase epsilon chain family. In terms of assembly, F-type ATPases have 2 components, CF(1) - the catalytic core - and CF(0) - the membrane proton channel. CF(1) has five subunits: alpha(3), beta(3), gamma(1), delta(1), epsilon(1). CF(0) has three main subunits: a, b and c.

It is found in the cell inner membrane. Functionally, produces ATP from ADP in the presence of a proton gradient across the membrane. The protein is ATP synthase epsilon chain of Agrobacterium fabrum (strain C58 / ATCC 33970) (Agrobacterium tumefaciens (strain C58)).